The following is a 455-amino-acid chain: Argininosuccinate lyase (455 aa).

It belongs to the lyase 1 family. Argininosuccinate lyase subfamily.

The protein resides in the cytoplasm. The enzyme catalyses 2-(N(omega)-L-arginino)succinate = fumarate + L-arginine. It functions in the pathway amino-acid biosynthesis; L-arginine biosynthesis; L-arginine from L-ornithine and carbamoyl phosphate: step 3/3. The protein is Argininosuccinate lyase of Roseiflexus sp. (strain RS-1).